The chain runs to 119 residues: Beta-2-microglobulin (119 aa).

The signal sequence occupies residues 1-20 (MARSVVVALLVLLSLSGLEA). In terms of domain architecture, Ig-like C1-type spans 25 to 114 (PKIQVYSRHP…VTFSTPKTVK (90 aa)). A disulfide bridge links Cys45 with Cys100.

It belongs to the beta-2-microglobulin family. As to quaternary structure, heterodimer of an alpha chain and a beta chain. Beta-2-microglobulin is the beta-chain of major histocompatibility complex class I molecules.

The protein localises to the secreted. Its function is as follows. Component of the class I major histocompatibility complex (MHC). Involved in the presentation of peptide antigens to the immune system. The polypeptide is Beta-2-microglobulin (B2M) (Ateles paniscus (Black spider monkey)).